We begin with the raw amino-acid sequence, 159 residues long: Protein Smg homolog (159 aa).

This sequence belongs to the Smg family.

This Vibrio parahaemolyticus serotype O3:K6 (strain RIMD 2210633) protein is Protein Smg homolog.